We begin with the raw amino-acid sequence, 173 residues long: Probable F-box protein At1g27490 (173 aa).

One can recognise an F-box domain in the interval 1 to 46 (MEWSLPVDLQEEILSRVPAKSLARWKSTPKQWKGPISIEFLHLLRS).

The sequence is that of Probable F-box protein At1g27490 from Arabidopsis thaliana (Mouse-ear cress).